Reading from the N-terminus, the 249-residue chain is Tetrahydromethanopterin S-methyltransferase subunit A (249 aa).

Residues 1–227 (MADKKEVIQN…KISSGYYAGK (227 aa)) lie on the Cytoplasmic side of the membrane. H84 provides a ligand contact to 5-hydroxybenzimidazolylcob(I)amide. The helical transmembrane segment at 228-248 (IEGIVIGFILTLVFLIIIIQG) threads the bilayer. Residue L249 is a topological domain, extracellular.

Belongs to the MtrA family. As to quaternary structure, the complex is composed of 8 subunits; MtrA, MtrB, MtrC, MtrD, MtrE, MtrF, MtrG and MtrH. Requires 5-hydroxybenzimidazolylcob(I)amide as cofactor.

Its subcellular location is the cell membrane. The enzyme catalyses 5-methyl-5,6,7,8-tetrahydromethanopterin + coenzyme M + 2 Na(+)(in) = 5,6,7,8-tetrahydromethanopterin + methyl-coenzyme M + 2 Na(+)(out). Its pathway is one-carbon metabolism; methanogenesis from CO(2); methyl-coenzyme M from 5,10-methylene-5,6,7,8-tetrahydromethanopterin: step 2/2. In terms of biological role, part of a complex that catalyzes the formation of methyl-coenzyme M and tetrahydromethanopterin from coenzyme M and methyl-tetrahydromethanopterin. This is an energy-conserving, sodium-ion translocating step. In Methanosphaera stadtmanae (strain ATCC 43021 / DSM 3091 / JCM 11832 / MCB-3), this protein is Tetrahydromethanopterin S-methyltransferase subunit A.